The primary structure comprises 430 residues: Mitochondrial distribution and morphology protein 10 (430 aa).

The segment covering 215–234 (SSSAMNPPSGTSASETNGSG) has biased composition (polar residues). 2 disordered regions span residues 215 to 237 (SSSA…GPSV) and 339 to 393 (LGAN…GPKE).

Belongs to the MDM10 family. In terms of assembly, component of the ER-mitochondria encounter structure (ERMES) or MDM complex, composed of MMM1, MDM10, MDM12 and MDM34. Associates with the mitochondrial outer membrane sorting assembly machinery SAM(core) complex.

It is found in the mitochondrion outer membrane. Its function is as follows. Component of the ERMES/MDM complex, which serves as a molecular tether to connect the endoplasmic reticulum and mitochondria. Components of this complex are involved in the control of mitochondrial shape and protein biogenesis and may function in phospholipid exchange. MDM10 is involved in the late assembly steps of the general translocase of the mitochondrial outer membrane (TOM complex). Functions in the TOM40-specific route of the assembly of outer membrane beta-barrel proteins, including the association of TOM40 with the receptor TOM22 and small TOM proteins. Can associate with the SAM(core) complex as well as the MDM12-MMM1 complex, both involved in late steps of the major beta-barrel assembly pathway, that is responsible for biogenesis of all outer membrane beta-barrel proteins. May act as a switch that shuttles between both complexes and channels precursor proteins into the TOM40-specific pathway. Plays a role in mitochondrial morphology and in the inheritance of mitochondria. This chain is Mitochondrial distribution and morphology protein 10, found in Chaetomium globosum (strain ATCC 6205 / CBS 148.51 / DSM 1962 / NBRC 6347 / NRRL 1970) (Soil fungus).